We begin with the raw amino-acid sequence, 269 residues long: UPF0162 protein bbp_163 (269 aa).

This sequence belongs to the UPF0162 family.

In Buchnera aphidicola subsp. Baizongia pistaciae (strain Bp), this protein is UPF0162 protein bbp_163.